We begin with the raw amino-acid sequence, 276 residues long: Protein canopy homolog 3 (276 aa).

Residues 1 to 26 (MESMSELAPRCLLFPLLLLLPLLLLP) form the signal peptide. In terms of domain architecture, Saposin B-type spans 47-269 (SKCEVCKYVA…EGVQKASPLP (223 aa)). Disulfide bonds link Cys-49/Cys-206, Cys-52/Cys-194, and Cys-104/Cys-166. Asn-153 carries N-linked (GlcNAc...) asparagine glycosylation. A coiled-coil region spans residues 153–179 (NETSAEVADLKKQCDVLVEEFEEVIED). The interval 218-276 (IASLGGKKSKKKRSGVKGSSSGSSKQRKELGGLGEDANAEEEEGVQKASPLPHSPPDEL) is disordered.

It belongs to the canopy family. As to quaternary structure, interacts with HSP90B1; this interaction is disrupted in the presence of ATP. Interacts with TLR1, TLR2, TLR4 and TLR9. Strongest interaction with TLR4.

The protein localises to the endoplasmic reticulum. Functionally, toll-like receptor (TLR)-specific co-chaperone for HSP90B1. Required for proper TLR folding, except that of TLR3, and hence controls TLR exit from the endoplasmic reticulum. Consequently, required for both innate and adaptive immune responses. The sequence is that of Protein canopy homolog 3 (Cnpy3) from Mus musculus (Mouse).